Consider the following 523-residue polypeptide: Mitochondrial distribution and morphology protein 34 (523 aa).

The 200-residue stretch at 1 to 200 (MSFKVNWKSL…LPTLIHQFSL (200 aa)) folds into the SMP-LTD domain. A disordered region spans residues 489–523 (ELSMDRSGKRKQRNYGSATYESENPIVAPPPPYSH).

Belongs to the MDM34 family. Component of the ER-mitochondria encounter structure (ERMES) or MDM complex, composed of MMM1, MDM10, MDM12 and MDM34.

The protein localises to the mitochondrion outer membrane. Component of the ERMES/MDM complex, which serves as a molecular tether to connect the endoplasmic reticulum (ER) and mitochondria. Components of this complex are involved in the control of mitochondrial shape and protein biogenesis, and function in nonvesicular lipid trafficking between the ER and mitochondria. MDM34 is required for the interaction of the ER-resident membrane protein MMM1 and the outer mitochondrial membrane-resident beta-barrel protein MDM10. The sequence is that of Mitochondrial distribution and morphology protein 34 from Scheffersomyces stipitis (strain ATCC 58785 / CBS 6054 / NBRC 10063 / NRRL Y-11545) (Yeast).